The sequence spans 167 residues: Ubiquitin-fold modifier-conjugating enzyme 1 (167 aa).

Cys116 (glycyl thioester intermediate) is an active-site residue.

The protein belongs to the ubiquitin-conjugating enzyme family. UFC1 subfamily. As to quaternary structure, interacts with UBA5 (via C-terminus). Interacts with UFL1. Interacts with UFM1.

E2-like enzyme which specifically catalyzes the second step in ufmylation. Accepts the ubiquitin-like modifier UFM1 from the E1 enzyme UBA5 and forms an intermediate with UFM1 via a thioester linkage. Ufmylation is involved in various processes, such as ribosome recycling, response to DNA damage, interferon response or reticulophagy (also called ER-phagy). This is Ubiquitin-fold modifier-conjugating enzyme 1 from Osmerus mordax (Rainbow smelt).